A 263-amino-acid polypeptide reads, in one-letter code: UPF0758 protein Pden_2304 (263 aa).

One can recognise an MPN domain in the interval 141–263 (VLTSWDALLD…ELSFRSEGLL (123 aa)). Zn(2+)-binding residues include His212, His214, and Asp225. The short motif at 212–225 (HNHPSGDPTPSQAD) is the JAMM motif element.

The protein belongs to the UPF0758 family.

This is UPF0758 protein Pden_2304 from Paracoccus denitrificans (strain Pd 1222).